A 380-amino-acid chain; its full sequence is Cytochrome b (380 aa).

A run of 4 helical transmembrane segments spans residues 33 to 53 (LGSL…FLAM), 77 to 98 (WVIR…FLHI), 113 to 133 (WNIG…GYVL), and 178 to 198 (FFTF…LHLL). Positions 83 and 97 each coordinate heme b. Positions 182 and 196 each coordinate heme b. Position 201 (His201) interacts with a ubiquinone. A run of 4 helical transmembrane segments spans residues 226–246 (TKDI…VLFS), 288–308 (LGGV…PMLH), 320–340 (LSQL…WIGG), and 347–367 (FITI…ILVP).

The protein belongs to the cytochrome b family. The cytochrome bc1 complex contains 11 subunits: 3 respiratory subunits (MT-CYB, CYC1 and UQCRFS1), 2 core proteins (UQCRC1 and UQCRC2) and 6 low-molecular weight proteins (UQCRH/QCR6, UQCRB/QCR7, UQCRQ/QCR8, UQCR10/QCR9, UQCR11/QCR10 and a cleavage product of UQCRFS1). This cytochrome bc1 complex then forms a dimer. Heme b serves as cofactor.

The protein localises to the mitochondrion inner membrane. Its function is as follows. Component of the ubiquinol-cytochrome c reductase complex (complex III or cytochrome b-c1 complex) that is part of the mitochondrial respiratory chain. The b-c1 complex mediates electron transfer from ubiquinol to cytochrome c. Contributes to the generation of a proton gradient across the mitochondrial membrane that is then used for ATP synthesis. This is Cytochrome b (MT-CYB) from Nomascus leucogenys (Northern white-cheeked gibbon).